A 736-amino-acid chain; its full sequence is Catalase-peroxidase (736 aa).

A disordered region spans residues 1–21; it reads MSNEQKCPFSGTHGARTTVGT. A cross-link (tryptophyl-tyrosyl-methioninium (Trp-Tyr) (with M-250)) is located at residues 96-224; that stretch reads WHSAGTYRTG…LAAVQMGLIY (129 aa). Histidine 97 functions as the Proton acceptor in the catalytic mechanism. Positions 224–250 form a cross-link, tryptophyl-tyrosyl-methioninium (Tyr-Met) (with W-96); the sequence is YVNPEGPDGNPDPVASGRDIRETFARM. Histidine 265 is a binding site for heme b.

Belongs to the peroxidase family. Peroxidase/catalase subfamily. As to quaternary structure, homodimer or homotetramer. Heme b serves as cofactor. Formation of the three residue Trp-Tyr-Met cross-link is important for the catalase, but not the peroxidase activity of the enzyme.

The enzyme catalyses H2O2 + AH2 = A + 2 H2O. It carries out the reaction 2 H2O2 = O2 + 2 H2O. Functionally, bifunctional enzyme with both catalase and broad-spectrum peroxidase activity. This Dechloromonas aromatica (strain RCB) protein is Catalase-peroxidase.